We begin with the raw amino-acid sequence, 200 residues long: MQLNVNDAQAIEVSELTFGGEFNETLVHQAVVAYMAGGRQGTKQQKTRSDVAGGGKRPWRQKGTGRARAGTTRGPIWRGGGVTFAARPQDHSQKLNKKMYRAALRSILAELVRSDRLVVVQDFAVEAPKTKDLLNKLNGMGLSDVLIVSDAVDQNLYLAARNLPHVDVRDVQGSDPVSLIAYEKVLITVSAVKKFEELLG.

The disordered stretch occupies residues 38 to 72 (GRQGTKQQKTRSDVAGGGKRPWRQKGTGRARAGTT).

This sequence belongs to the universal ribosomal protein uL4 family. Part of the 50S ribosomal subunit.

In terms of biological role, one of the primary rRNA binding proteins, this protein initially binds near the 5'-end of the 23S rRNA. It is important during the early stages of 50S assembly. It makes multiple contacts with different domains of the 23S rRNA in the assembled 50S subunit and ribosome. Functionally, forms part of the polypeptide exit tunnel. In Pseudomonas putida (strain ATCC 700007 / DSM 6899 / JCM 31910 / BCRC 17059 / LMG 24140 / F1), this protein is Large ribosomal subunit protein uL4.